Here is a 557-residue protein sequence, read N- to C-terminus: Formate--tetrahydrofolate ligase (557 aa).

An ATP-binding site is contributed by 66-73; that stretch reads TPAGEGKT.

This sequence belongs to the formate--tetrahydrofolate ligase family.

It catalyses the reaction (6S)-5,6,7,8-tetrahydrofolate + formate + ATP = (6R)-10-formyltetrahydrofolate + ADP + phosphate. It functions in the pathway one-carbon metabolism; tetrahydrofolate interconversion. The protein is Formate--tetrahydrofolate ligase of Bartonella tribocorum (strain CIP 105476 / IBS 506).